A 386-amino-acid chain; its full sequence is MTLDDSSLQKYGFIKRETLGSINIDPLQTGGLLTEAARQALVEWGDGYSVCDFCGGVLDQIKKPPIHDFVHKALPEFLGCDEARVTNGARESKFAVMHSMGKPGDWIVLDGLAHYSSYVAAERAGLNVKVVPHAGSPEYYLDPEGYGTAIEEVTKESGKPPVLALVTYPDGSYGNIPDAGKIASVCHEYEVPLLLNGAYCVGRMPVSAKEIGADFIVGSGHKSMAASGPVGVLGVSEEYAPIVFRKSVYSKVKEVELLGCTARGATVMTMIASFPEVVKRVRNWDQEVENARWFSARLEDMGFIQRGQKPHSHDLMFFEAPGFYEISQKIKKGRYFLYKELKERNIHGIKSGLTKYFKLSTFGLGKEKLGVVADSFEEILKKYENV.

Pyridoxal 5'-phosphate is bound by residues 89–90 (AR), Asn-196, and 219–221 (SGH). Position 222 is an N6-(pyridoxal phosphate)lysine (Lys-222).

Belongs to the SepCysS family. Homodimer. Interacts with SepRS. The cofactor is pyridoxal 5'-phosphate.

It carries out the reaction O-phospho-L-seryl-tRNA(Cys) + hydrogen sulfide + H(+) = L-cysteinyl-tRNA(Cys) + phosphate. Converts O-phospho-L-seryl-tRNA(Cys) (Sep-tRNA(Cys)) to L-cysteinyl-tRNA(Cys) (Cys-tRNA(Cys)). The protein is O-phospho-L-seryl-tRNA:Cys-tRNA synthase of Methanosarcina acetivorans (strain ATCC 35395 / DSM 2834 / JCM 12185 / C2A).